Here is a 597-residue protein sequence, read N- to C-terminus: Putative heat shock protein HSP 90-beta-3 (597 aa).

ATP contacts are provided by asparagine 46, aspartate 88, and lysine 107. The tract at residues aspartate 201 to lysine 241 is disordered. Residues isoleucine 204–aspartate 223 show a composition bias toward acidic residues. Basic and acidic residues predominate over residues glutamate 224–glycine 233. Residue arginine 334 participates in ATP binding. Residues leucine 414–lysine 446 are a coiled coil. Residues aspartate 564–proline 578 are compositionally biased toward acidic residues. The disordered stretch occupies residues aspartate 564–aspartate 597. Residues methionine 593–aspartate 597 carry the TPR repeat-binding motif.

It belongs to the heat shock protein 90 family. In terms of assembly, homodimer.

It is found in the cytoplasm. Functionally, putative molecular chaperone that may promote the maturation, structural maintenance and proper regulation of specific target proteins. The chain is Putative heat shock protein HSP 90-beta-3 (HSP90AB3P) from Homo sapiens (Human).